Here is a 464-residue protein sequence, read N- to C-terminus: Serine protease PepD (464 aa).

Positions 1-71 (MAKLARVVGL…TQYRQPYEAL (71 aa)) are disordered. Residues 1–100 (MAKLARVVGL…GMVRQRPRAG (100 aa)) are Cytoplasmic-facing. The segment covering 39–48 (QGQQQTYSQQ) has biased composition (low complexity). A helical transmembrane segment spans residues 101-121 (MLAIGAVTIAVVSAGIGGAAA). At 122 to 464 (SLVGFNRAPA…VQVTLGKAEQ (343 aa)) the chain is on the periplasmic side. Active-site charge relay system residues include histidine 197, aspartate 236, and serine 317. Positions 368 to 449 (LISTGKASHA…TVALTFQDPS (82 aa)) constitute a PDZ domain.

This sequence belongs to the peptidase S1C family. As to quaternary structure, homotrimer. Interacts with numerous proteins, including the 35 kDa antigen PspA.

The protein localises to the cell inner membrane. Its subcellular location is the secreted. The protein resides in the cell wall. It catalyses the reaction Acts on substrates that are at least partially unfolded. The cleavage site P1 residue is normally between a pair of hydrophobic residues, such as Val-|-Val.. Its activity is regulated as follows. Probably regulates its own activity by autocleavage, which removes the PDZ domain. Inhibited by the serine protease inhibitor diisopropylfluorophosphate (DFP). Inhibited by fluoroquinolone such as ciprofloxacin, moxifloxacin and ofloxacin and their analogs. Its function is as follows. Required for virulence. Acts both as a protease, which degrades and/or refolds damaged substrate targets, and as a chaperone. Plays an important role in the stress response network mediated through the two-component regulatory system MprAB and SigE signaling networks. May utilize its PDZ domain to recognize and process misfolded proteins at the cell membrane, leading to activation of the MprAB and SigE signaling pathways and subsequent establishment of a positive feedback loop that facilitates bacterial adaptation. Interacts with and potentially cleaves several proteins, including the 35 kDa antigen PspA. Proteolytic cleavage of PspA may help to maintain cell envelope homeostasis in Mycobacterium and regulate specific stress response pathways during periods of extracytoplasmic stress. In vitro, exhibits proteolytic activity against the artificial substrate beta-casein. The protein is Serine protease PepD of Mycobacterium tuberculosis (strain ATCC 25618 / H37Rv).